The chain runs to 314 residues: ATP synthase gamma chain (314 aa).

Belongs to the ATPase gamma chain family. F-type ATPases have 2 components, CF(1) - the catalytic core - and CF(0) - the membrane proton channel. CF(1) has five subunits: alpha(3), beta(3), gamma(1), delta(1), epsilon(1). CF(0) has three main subunits: a, b and c.

The protein localises to the cellular thylakoid membrane. Produces ATP from ADP in the presence of a proton gradient across the membrane. The gamma chain is believed to be important in regulating ATPase activity and the flow of protons through the CF(0) complex. The sequence is that of ATP synthase gamma chain from Gloeothece citriformis (strain PCC 7424) (Cyanothece sp. (strain PCC 7424)).